The sequence spans 464 residues: Soluble pyridine nucleotide transhydrogenase (464 aa).

35–44 (DSRRQVGGNC) lines the FAD pocket.

This sequence belongs to the class-I pyridine nucleotide-disulfide oxidoreductase family. It depends on FAD as a cofactor.

It localises to the cytoplasm. It catalyses the reaction NAD(+) + NADPH = NADH + NADP(+). Conversion of NADPH, generated by peripheral catabolic pathways, to NADH, which can enter the respiratory chain for energy generation. The sequence is that of Soluble pyridine nucleotide transhydrogenase from Pseudomonas fluorescens (strain SBW25).